We begin with the raw amino-acid sequence, 351 residues long: Protein MSS2, mitochondrial (351 aa).

TPR repeat units follow at residues 155 to 188 (HLTV…ENST) and 260 to 294 (KECF…MDLE).

In terms of assembly, interacts with COX18.

It localises to the mitochondrion inner membrane. Required to stabilize mitochondrial cytochrome C oxidase subunit 2 (COX2) and to translocate the C-terminal domain of COX2 through the inner membrane. This Saccharomyces cerevisiae (strain ATCC 204508 / S288c) (Baker's yeast) protein is Protein MSS2, mitochondrial (MSS2).